The chain runs to 199 residues: Transcription regulator complex subunit bur6 (199 aa).

The interval 106 to 199 is disordered; that stretch reads PPIKAERKTK…SEASSASGDE (94 aa). The segment covering 112-121 has biased composition (basic residues); the sequence is RKTKRPRARR. A compositionally biased stretch (polar residues) spans 185-199; it reads SDKTTSEASSASGDE.

Belongs to the NC2 alpha/DRAP1 family.

The protein resides in the nucleus. Transcription regulator complex subunit that is essential for cell cycle progression. In Schizosaccharomyces pombe (strain 972 / ATCC 24843) (Fission yeast), this protein is Transcription regulator complex subunit bur6.